The sequence spans 158 residues: Phosphopantetheine adenylyltransferase (158 aa).

Residue Ser9 participates in substrate binding. ATP is bound by residues 9 to 10 (SF) and His17. Positions 41, 73, and 87 each coordinate substrate. Residues 88–90 (GLR), Glu98, and 122–128 (YSFVSSS) each bind ATP.

The protein belongs to the bacterial CoaD family. As to quaternary structure, homohexamer. Mg(2+) serves as cofactor.

The protein resides in the cytoplasm. The enzyme catalyses (R)-4'-phosphopantetheine + ATP + H(+) = 3'-dephospho-CoA + diphosphate. It participates in cofactor biosynthesis; coenzyme A biosynthesis; CoA from (R)-pantothenate: step 4/5. Its function is as follows. Reversibly transfers an adenylyl group from ATP to 4'-phosphopantetheine, yielding dephospho-CoA (dPCoA) and pyrophosphate. The chain is Phosphopantetheine adenylyltransferase from Mycolicibacterium smegmatis (strain ATCC 700084 / mc(2)155) (Mycobacterium smegmatis).